The primary structure comprises 108 residues: Heme oxygenase (staphylobilin-producing) 2 (108 aa).

Residues 2-93 (FMAENRLQLQ…DDDGQQSPIL (92 aa)) form the ABM domain. Asn-6 provides a ligand contact to Fe cation. Heme is bound by residues 21 to 28 (RFYNRQGI) and His-76.

This sequence belongs to the antibiotic biosynthesis monooxygenase family. Heme-degrading monooxygenase IsdG subfamily. Homodimer.

The protein localises to the cytoplasm. It catalyses the reaction heme b + 5 AH2 + 4 O2 + 2 H(+) = delta-staphylobilin + Fe(2+) + formaldehyde + 5 A + 4 H2O. It carries out the reaction heme b + 5 AH2 + 4 O2 + 2 H(+) = beta-staphylobilin + Fe(2+) + formaldehyde + 5 A + 4 H2O. Functionally, allows bacterial pathogens to use the host heme as an iron source. Catalyzes the oxidative degradation of the heme macrocyclic porphyrin ring to the oxo-bilirubin chromophore staphylobilin (a mixture of the linear tetrapyrroles 5-oxo-delta-bilirubin and 15-oxo-beta-bilirubin) in the presence of a suitable electron donor such as ascorbate or NADPH--cytochrome P450 reductase, with subsequent release of free iron. The chain is Heme oxygenase (staphylobilin-producing) 2 (isdI) from Staphylococcus aureus (strain MRSA252).